A 445-amino-acid chain; its full sequence is MSYFGTDGIRGKFGQMPITPEFALKLGFAAGKVLKRTSPKNKPLVVLGKDTRLSGYILESALQAGLNAAGVYVHLLGPLPTPAIAHLTRALHAHAGIVISASHNPYFDNGIKFFSSEGKKLPDSLQEEINKELEKDLFIEDTANLGKSVRVTDANGRYIEFCKSTFPYHFDLNNLKIVVDCAHGAAYSVGPSVFRELGAKVVALYNEPDGLNINENCGSTHPESLQKAVVEHGADLGIAFDGDADRVVMVDKFGSLIDGDHILYILATQAKNKPAGVVGTVMSNMALEVALEKANVGFVRAKVGDRYVLQALEENGWVTGGEPSGHILTLDKSTTGDAIIAALQVLTVMVEQNKALHELVHDFKLYPQVLVNVRLEQMLDPYSIPALVAEFNKAEEQLKGRGRILIRKSGTEPVIRVMVEGDNEQEVKTLAEHLANAVRSQAQVA.

Residue Ser-102 is the Phosphoserine intermediate of the active site. The Mg(2+) site is built by Ser-102, Asp-241, Asp-243, and Asp-245. Ser-102 carries the phosphoserine modification.

It belongs to the phosphohexose mutase family. Mg(2+) serves as cofactor. Activated by phosphorylation.

It catalyses the reaction alpha-D-glucosamine 1-phosphate = D-glucosamine 6-phosphate. Functionally, catalyzes the conversion of glucosamine-6-phosphate to glucosamine-1-phosphate. The sequence is that of Phosphoglucosamine mutase from Acinetobacter baumannii (strain ACICU).